Reading from the N-terminus, the 207-residue chain is Large ribosomal subunit protein uL4 (207 aa).

A disordered region spans residues 45-89 (RQGTHKVKTRSEVRGGGRKPWRQKGTGRARQGSIRSPQWRGGGTV). The segment covering 60-71 (GGRKPWRQKGTG) has biased composition (basic residues).

This sequence belongs to the universal ribosomal protein uL4 family. In terms of assembly, part of the 50S ribosomal subunit.

Its function is as follows. One of the primary rRNA binding proteins, this protein initially binds near the 5'-end of the 23S rRNA. It is important during the early stages of 50S assembly. It makes multiple contacts with different domains of the 23S rRNA in the assembled 50S subunit and ribosome. In terms of biological role, forms part of the polypeptide exit tunnel. This Bacillus anthracis (strain A0248) protein is Large ribosomal subunit protein uL4.